The following is a 214-amino-acid chain: Redox-sensing transcriptional repressor Rex (214 aa).

Residues 17 to 56 (KYHRYLEELLKSDVDRISSKELSEKIGFTASQIRQDLNCF) constitute a DNA-binding region (H-T-H motif). 91 to 96 (GAGNIG) is a binding site for NAD(+).

The protein belongs to the transcriptional regulatory Rex family. In terms of assembly, homodimer.

It localises to the cytoplasm. Modulates transcription in response to changes in cellular NADH/NAD(+) redox state. In Clostridium acetobutylicum (strain ATCC 824 / DSM 792 / JCM 1419 / IAM 19013 / LMG 5710 / NBRC 13948 / NRRL B-527 / VKM B-1787 / 2291 / W), this protein is Redox-sensing transcriptional repressor Rex.